A 334-amino-acid polypeptide reads, in one-letter code: Cobalt-precorrin-5B C(1)-methyltransferase (334 aa).

Belongs to the CbiD family.

The catalysed reaction is Co-precorrin-5B + S-adenosyl-L-methionine = Co-precorrin-6A + S-adenosyl-L-homocysteine. The protein operates within cofactor biosynthesis; adenosylcobalamin biosynthesis; cob(II)yrinate a,c-diamide from sirohydrochlorin (anaerobic route): step 6/10. Catalyzes the methylation of C-1 in cobalt-precorrin-5B to form cobalt-precorrin-6A. This is Cobalt-precorrin-5B C(1)-methyltransferase from Methanoregula boonei (strain DSM 21154 / JCM 14090 / 6A8).